The chain runs to 480 residues: tRNA-2-methylthio-N(6)-dimethylallyladenosine synthase (480 aa).

One can recognise an MTTase N-terminal domain in the interval 25–145 (GVFYVHTLGC…LPQLLDQARI (121 aa)). [4Fe-4S] cluster-binding residues include Cys34, Cys74, Cys108, Cys182, Cys186, and Cys189. The Radical SAM core domain maps to 168 to 397 (RASKVSSWVA…VALQERITEE (230 aa)). The region spanning 400 to 470 (KTFEGRDVEV…RHNLIADPNP (71 aa)) is the TRAM domain.

Belongs to the methylthiotransferase family. MiaB subfamily. Monomer. The cofactor is [4Fe-4S] cluster.

It is found in the cytoplasm. The catalysed reaction is N(6)-dimethylallyladenosine(37) in tRNA + (sulfur carrier)-SH + AH2 + 2 S-adenosyl-L-methionine = 2-methylsulfanyl-N(6)-dimethylallyladenosine(37) in tRNA + (sulfur carrier)-H + 5'-deoxyadenosine + L-methionine + A + S-adenosyl-L-homocysteine + 2 H(+). Its function is as follows. Catalyzes the methylthiolation of N6-(dimethylallyl)adenosine (i(6)A), leading to the formation of 2-methylthio-N6-(dimethylallyl)adenosine (ms(2)i(6)A) at position 37 in tRNAs that read codons beginning with uridine. The protein is tRNA-2-methylthio-N(6)-dimethylallyladenosine synthase of Bifidobacterium adolescentis (strain ATCC 15703 / DSM 20083 / NCTC 11814 / E194a).